We begin with the raw amino-acid sequence, 335 residues long: Glucokinase (335 aa).

ATP is bound at residue 11–16; that stretch reads ADIGGT.

Belongs to the bacterial glucokinase family.

Its subcellular location is the cytoplasm. The catalysed reaction is D-glucose + ATP = D-glucose 6-phosphate + ADP + H(+). This is Glucokinase from Xanthomonas campestris pv. campestris (strain 8004).